We begin with the raw amino-acid sequence, 328 residues long: Carbonic anhydrase-related protein 11 (328 aa).

The signal sequence occupies residues methionine 1–alanine 23. Positions aspartate 33–arginine 303 constitute an Alpha-carbonic anhydrase domain. Asparagine 118, asparagine 170, and asparagine 260 each carry an N-linked (GlcNAc...) asparagine glycan. Residues leucine 299–arginine 328 are disordered. The span at leucine 319–arginine 328 shows a compositional bias: basic and acidic residues.

This sequence belongs to the alpha-carbonic anhydrase family. Expressed abundantly in the brain with moderate expression also present in spinal cord and thyroid.

Its subcellular location is the secreted. Does not have a catalytic activity. The sequence is that of Carbonic anhydrase-related protein 11 (CA11) from Homo sapiens (Human).